Here is a 286-residue protein sequence, read N- to C-terminus: Carbohydrate-binding domain-containing protein Cthe_2159 (286 aa).

A signal peptide spans 1–20 (MSIKKLILAASILTTLALTG). Cysteine 21 carries the N-palmitoyl cysteine lipid modification. Residue cysteine 21 is the site of S-diacylglycerol cysteine attachment. Positions 124–225 (GKDNVLTDAE…GIKVENTEEP (102 aa)) are polygalacturonic acid-binding. The Ca(2+) site is built by arginine 152, aspartate 153, aspartate 154, asparagine 177, aspartate 178, aspartate 215, aspartate 243, aspartate 244, and aspartate 247.

In terms of assembly, monomer.

The protein localises to the cell membrane. Binds cellulosic and pectic substrates. Displays no enzyme activity (in vitro). The chain is Carbohydrate-binding domain-containing protein Cthe_2159 from Acetivibrio thermocellus (strain ATCC 27405 / DSM 1237 / JCM 9322 / NBRC 103400 / NCIMB 10682 / NRRL B-4536 / VPI 7372) (Clostridium thermocellum).